The following is a 662-amino-acid chain: MMEPEEYRERGREMVDYICQYLSTVRERRVTPDVQPGYLRAQLPESAPEDPDSWDSIFGDIERIIMPGVVHWQSPHMHAYYPALTSWPSLLGDMLADAINCLGFTWASSPACTELEMNVMDWLAKMLGLPEHFLHHHPSSQGGGVLQSTVSESTLIALLAARKNKILEMKTSEPDADESCLNARLVAYASDQAHSSVEKAGLISLVKMKFLPVDDNFSLRGEALQKAIEEDKQRGLVPVFVCATLGTTGVCAFDCLSELGPICAREGLWLHIDAAYAGTAFLCPEFRGFLKGIEYADSFTFNPSKWMMVHFDCTGFWVKDKYKLQQTFSVNPIYLRHANSGVATDFMHWQIPLSRRFRSVKLWFVIRSFGVKNLQAHVRHGTEMAKYFESLVRNDPSFEIPAKRHLGLVVFRLKGPNCLTENVLKEIAKAGRLFLIPATIQDKLIIRFTVTSQFTTRDDILRDWNLIRDAATLILSQHCTSQPSPRVGNLISQIRGARAWACGTSLQSVSGAGDDPVQARKIIKQPQRVGAGPMKRENGLHLETLLDPVDDCFSEEAPDATKHKLSSFLFSYLSVQTKKKTVRSLSCNSVPVSAQKPLPTEASVKNGGSSRVRIFSRFPEDMMMLKKSAFKKLIKFYSVPSFPECSSQCGLQLPCCPLQAMV.

Positions 81 and 194 each coordinate substrate. Lys305 carries the N6-(pyridoxal phosphate)lysine modification.

It belongs to the group II decarboxylase family. Homodimer. Pyridoxal 5'-phosphate is required as a cofactor.

The enzyme catalyses L-histidine + H(+) = histamine + CO2. It functions in the pathway amine and polyamine biosynthesis; histamine biosynthesis; histamine from L-histidine: step 1/1. Its function is as follows. Catalyzes the biosynthesis of histamine from histidine. The polypeptide is Histidine decarboxylase (HDC) (Homo sapiens (Human)).